Consider the following 958-residue polypeptide: N-terminal acetyltransferase B complex subunit NAA25 homolog (958 aa).

TPR repeat units follow at residues Ala-7–Thr-42, Glu-78–Glu-111, and Phe-320–Tyr-353.

It belongs to the MDM20/NAA25 family. In terms of assembly, component of the N-terminal acetyltransferase B (NatB) complex. Interacts with acer-1. As to expression, expressed in germline and somatic cells.

The protein resides in the cytoplasm. Its subcellular location is the nucleus. It is found in the chromosome. In terms of biological role, non-catalytic subunit of the NatB complex which catalyzes acetylation of the N-terminal methionine residues of proteins beginning with Met-Asp or Met-Glu. Required for chromosome organization and arrangement; specifically for assembly of the central region components of the synaptonemal complex onto chromosomes during meiosis and for DNA double stranded break formation and repair. Acts downstream of xnd-1 to regulate levels of histone acetylation in germ and somatic cell nuclei by controlling acetyl-CoA production through antagonizing the acetyl-CoA hydrolase activity of acer-1. The polypeptide is N-terminal acetyltransferase B complex subunit NAA25 homolog (Caenorhabditis elegans).